The following is a 183-amino-acid chain: Bifunctional protein PyrR (183 aa).

Residues 46–47, Arg-87, 107–115, Arg-140, and Val-164 contribute to the substrate site; these read TR and DDVIFSGRT. The PRPP-binding signature appears at 103-115; it reads VVLVDDVIFSGRT.

Belongs to the purine/pyrimidine phosphoribosyltransferase family. PyrR subfamily.

The enzyme catalyses UMP + diphosphate = 5-phospho-alpha-D-ribose 1-diphosphate + uracil. Regulates the transcription of the pyrimidine nucleotide (pyr) operon in response to exogenous pyrimidines. Its function is as follows. Also displays a weak uracil phosphoribosyltransferase activity which is not physiologically significant. The protein is Bifunctional protein PyrR of Thermosynechococcus vestitus (strain NIES-2133 / IAM M-273 / BP-1).